The sequence spans 1403 residues: E3 ubiquitin-protein ligase SNT2 (1403 aa).

The interval 40-62 is disordered; that stretch reads SGAKTKGSNSQTPRNCKRTSNPA. Positions 45–62 are enriched in polar residues; that stretch reads KGSNSQTPRNCKRTSNPA. Residues 121–258 form the BAH domain; it reads VLLSANDTIY…RYTLKYYKVY (138 aa). The PHD-type 1 zinc finger occupies 317–369; the sequence is DKRCQFCKEWCIQKESLSCDECGVCAHLYCMDPPLDRKPNKDVVWTCFSCLQK. The SANT domain occupies 555–606; that stretch reads LKEPSFTAVEIRKFEEAVEKFGSELRPVCEYVGTQPMSMIVRFYYNWKKTER. A PHD-type 2 zinc finger spans residues 1038–1097; sequence RTFCSVCKEKFNDNDNYEVVCGNCGLTVHYFCYAIKLPKDMKKNTNLKTFKWLCDPCSND. Residues 1041-1095 form an RING-type; degenerate zinc finger; sequence CSVCKEKFNDNDNYEVVCGNCGLTVHYFCYAIKLPKDMKKNTNLKTFKWLCDPCS. Residues 1105-1153 form a C2HC pre-PHD-type zinc finger; that stretch reads TYQCSMCPTKDYDYDRYRSQSFKICPDALKCTSLGTWVHLVCSLFNEDI. Residues 1177–1231 form a PHD-type 3; degenerate zinc finger; it reads FTCGVCRINGGGLVKCNKCQYRYHITCAQNSSNFKLMFEKKNMSVDTTLPCIKDV.

In terms of assembly, component of the Snt2C complex composed of SNT2, ECM5 and RPD3. Interacts with the E2 ubiquitin-conjugating enzyme UBC4 and histones H3 and H4. Binding is enhanced to methylated histone H3K36me3.

Its subcellular location is the cytoplasm. It is found in the nucleus. It carries out the reaction S-ubiquitinyl-[E2 ubiquitin-conjugating enzyme]-L-cysteine + [acceptor protein]-L-lysine = [E2 ubiquitin-conjugating enzyme]-L-cysteine + N(6)-ubiquitinyl-[acceptor protein]-L-lysine.. Transcriptional regulator that, together with ECM5, recruits histone deacetylase RPD3 to a small number of promoters of stress-response genes in response to oxidative stress. Probable ubiquitin-protein ligase involved in the degradation-related ubiquitination of histones. Contributes to the post-translational regulation of histone protein levels by polyubiquitination of excess histones for subsequent degradation. This Saccharomyces cerevisiae (strain ATCC 204508 / S288c) (Baker's yeast) protein is E3 ubiquitin-protein ligase SNT2.